The following is a 96-amino-acid chain: Small ribosomal subunit protein bS6 (96 aa).

It belongs to the bacterial ribosomal protein bS6 family.

Functionally, binds together with bS18 to 16S ribosomal RNA. The sequence is that of Small ribosomal subunit protein bS6 from Bacillus mycoides (strain KBAB4) (Bacillus weihenstephanensis).